A 680-amino-acid polypeptide reads, in one-letter code: DNA-directed RNA polymerase subunit beta' (680 aa).

4 residues coordinate Zn(2+): Cys-69, Cys-71, Cys-87, and Cys-90. Mg(2+) contacts are provided by Asp-489, Asp-491, and Asp-493.

It belongs to the RNA polymerase beta' chain family. RpoC1 subfamily. As to quaternary structure, in plastids the minimal PEP RNA polymerase catalytic core is composed of four subunits: alpha, beta, beta', and beta''. When a (nuclear-encoded) sigma factor is associated with the core the holoenzyme is formed, which can initiate transcription. Mg(2+) serves as cofactor. Zn(2+) is required as a cofactor.

It localises to the plastid. The protein resides in the chloroplast. The enzyme catalyses RNA(n) + a ribonucleoside 5'-triphosphate = RNA(n+1) + diphosphate. Functionally, DNA-dependent RNA polymerase catalyzes the transcription of DNA into RNA using the four ribonucleoside triphosphates as substrates. This chain is DNA-directed RNA polymerase subunit beta', found in Aethionema grandiflorum (Persian stone-cress).